The chain runs to 145 residues: Cystatin-like 1 (145 aa).

The first 19 residues, 1–19 (MGIGCWRNPLLLLIALVLS), serve as a signal peptide directing secretion. In terms of domain architecture, Cystatin spans 37 to 115 (SKKNMNSTLN…KKLRKSLICE (79 aa)). Asn-42 carries an N-linked (GlcNAc...) asparagine glycan. 2 disulfides stabilise this stretch: Cys-91-Cys-101 and Cys-114-Cys-134.

It belongs to the cystatin family.

Its subcellular location is the secreted. This chain is Cystatin-like 1 (CSTL1), found in Homo sapiens (Human).